The sequence spans 489 residues: ERO1-like protein alpha (489 aa).

An N-terminal signal peptide occupies residues M1–A20. 8 cysteine pairs are disulfide-bonded: C27/C40, C29/C38, C77/C382, C86/C91, C86/C123, C91/C96, C200/C232, and C385/C388. Residues R179, T181, and W192 each coordinate FAD. FAD-binding residues include S243 and H246. N271 is a glycosylation site (N-linked (GlcNAc...) asparagine). FAD is bound by residues R278 and R291. N375 carries an N-linked (GlcNAc...) asparagine glycan.

It belongs to the EROs family. As to quaternary structure, predominantly monomer. May function both as a monomer and a homodimer. FAD serves as cofactor. Post-translationally, the Cys-86/Cys-91 and Cys-385/Cys-388 disulfide bonds constitute the redox-active center. The Cys-86/Cys-91 disulfide bond may accept electron from protein disulfide isomerase (PDI) and funnel them to the active site disulfide Cys-385/Cys-388.

The protein localises to the endoplasmic reticulum membrane. Enzyme activity is tightly regulated to prevent the accumulation of reactive oxygen species in the endoplasmic reticulum. Reversibly down-regulated by the formation of disulfide bonds between the active site Cys-86 and Cys-123, and between Cys-91 and Cys-96. Glutathione may be required to regulate its activity in the endoplasmic reticulum. Its function is as follows. Oxidoreductase involved in disulfide bond formation in the endoplasmic reticulum. Efficiently reoxidizes P4HB/PDI, the enzyme catalyzing protein disulfide formation, in order to allow P4HB to sustain additional rounds of disulfide formation. Following P4HB reoxidation, passes its electrons to molecular oxygen via FAD, leading to the production of reactive oxygen species (ROS) in the cell. Required for the folding of immunoglobulins. The chain is ERO1-like protein alpha from Danio rerio (Zebrafish).